A 294-amino-acid polypeptide reads, in one-letter code: ATP synthase gamma chain (294 aa).

It belongs to the ATPase gamma chain family. F-type ATPases have 2 components, CF(1) - the catalytic core - and CF(0) - the membrane proton channel. CF(1) has five subunits: alpha(3), beta(3), gamma(1), delta(1), epsilon(1). CF(0) has three main subunits: a, b and c.

It localises to the cell inner membrane. Its function is as follows. Produces ATP from ADP in the presence of a proton gradient across the membrane. The gamma chain is believed to be important in regulating ATPase activity and the flow of protons through the CF(0) complex. The polypeptide is ATP synthase gamma chain (Paraburkholderia xenovorans (strain LB400)).